A 76-amino-acid chain; its full sequence is Vasotab-TY2 (76 aa).

The first 21 residues, 1–21, serve as a signal peptide directing secretion; sequence MKFALFSVLVLMLIATFVAAD. The Kazal-like domain maps to 22–76; the sequence is DCPRICTADYTPVCGTPSGGRRSANRTFANQCGLDSHNCLNKGATYDKLHDGECK. Disulfide bonds link Cys-23/Cys-60, Cys-27/Cys-53, and Cys-35/Cys-75.

As to expression, expressed by the salivary gland.

The protein localises to the secreted. Functionally, vasodilator protein that inhibits vasoconstriction of isolated rat femoral artery induced by phenylephrine. Since platelet aggregation and vasoconstriction are key hemostatic responses, particularly in small wounds, this protein likely participates in the antihemostatic responses during blood feeding. Blocks L-type calcium channels (Cav1/CACNA1) in left ventricular myocytes isolated from rat hearts. This is Vasotab-TY2 from Tabanus yao (Horsefly).